The primary structure comprises 291 residues: Putative transport permease ycf38 (291 aa).

6 helical membrane-spanning segments follow: residues 47–67, 87–107, 135–155, 165–185, 195–215, and 262–282; these read ATLMAGIIQPLLWLILFGGLF, SGIIIFTSFTGALNSGLPLMF, FMTCISLIQVVFIVTASLFMG, MIFGLMILLVTVGVTMLSLAL, LLAFILVVNLPFLFSSTALAP, and ICLGQIIILLIALDIMAAYLV. The ABC transmembrane type-2 domain occupies 47 to 289; sequence ATLMAGIIQP…YLVSNILKAK (243 aa).

Belongs to the ABC-2 integral membrane protein family.

The protein resides in the plastid. The protein localises to the chloroplast membrane. In Pyropia yezoensis (Susabi-nori), this protein is Putative transport permease ycf38 (ycf38).